The following is a 1226-amino-acid chain: MREGSFPRRIGLLLGLLGLLAGVATFNIDTKNVVVHHMAGNYFGYSLDFYHEQKGMPVLVVGAPEAESNNPNLAGIRRPGAVYACSVNRATCREVHVDKMKGNLKKLNGSHLVPIEEKSHQFFGATVRSNDKHDKIVVCAPKYTYFYSKFEVIEPVGTCFYAENGFDNAEEFSSCKQEPARHGRHRLGYGQCGFSAAVPGKKNQNRVFIGAPGVWYWQGAMFSQNIKNQTDRPNTEYGSKEYDHDMMGYSTATGDFDGDGIDDIVAGVPRGNDLHGKLVLYTSKLKMMINLTDEVSTQHGQYCGGSVAVADVNKDGRDDIIMGCPFYTDYGSVKDAKTQERKPQYDVGKVIVMLQTAPGVFGKQIAVVGDDQWGRFGHAVAAAGDLNLDGYNDVIVGAPYAGKNKQGAVYVIHGSKDGVRELPTQKIEGANIGHGNIKSFGFSLTGNEDVDGNGMPDIAVGAWKSGNAAVLLTKPVVTVTGQTEPESALISVEDKNCDVDGKLGKQACKHINTCFKYEGKGDTPNDLEFDLRFNLDDHSPEPRAYFLQKDVKSDRSIKVAQGSKTRDHPSSIEQRVRLEKGRQKCFRHRFFASSTMKDKLSPIHWSVNYTYVESKTGKLRGDKLEPAIDTTVPLSFQNKINIANNCGKDDLCVPDLKVTAVADREKFLLGTQDNTMLINVTVQNGGEDSYETKLYFDVPQGFEYGGIESVGGDGSKSAPACSPTSDEPDSDGKWTFACDLGNPLPANKVVSSVVRVTASSDKPPLAPISINAHVNSSNDEEAHTVADNKVTFTIPVDFKNQLSLNGRSNPEQVDFSMTNKTRVDAFDDNEIGPVVSHLYQISNRGPSEVDSATLDIFWPSFSTEGGHLLYIITEPVVNPPNKGRCRVKQLQNVNPLNLRITNEHVPTEPPVAKTPNEYSREEDDESYEDETTTQSQSTRHQSTQHQTHHQSGPVHVYEKDEEKIRQNTGNWQYVEDKKKKGDYEYIPDDQEYDGDDFEEEDDEDFDRAGSKRVKRNPTPKKKKKGGEHRGEPRSDKARFSDLREAVKLSKEAGGVVDYKGPLSRASVDCNSLRCTHIECDIYDLKEDEFVLVEIFSRLYTNTLVDEKNPGGDISSLALARVTSTKYNLPHKPTLITAVSTNMNAIASEEGRDLPWWLYLLAILIGLAILILLILLLWRCGFFKRNRPPTEHAELRADRQPNAQYADSQSRYTSQDQYNQGRHGQML.

Residues 1–25 form the signal peptide; the sequence is MREGSFPRRIGLLLGLLGLLAGVAT. The Extracellular segment spans residues 26 to 1154; sequence FNIDTKNVVV…IASEEGRDLP (1129 aa). FG-GAP repeat units lie at residues 27–94, 108–171, 178–233, 234–290, 291–345, 362–421, and 425–488; these read NIDT…TCRE, NGSH…NAEE, EPAR…TDRP, NTEY…MMIN, LTDE…KPQY, GKQI…GVRE, and QKIE…PESA. N-linked (GlcNAc...) asparagine glycosylation is found at N108, N228, and N290. N-linked (GlcNAc...) asparagine glycosylation occurs at N608. A Cell attachment site motif is present at residues 620-622; that stretch reads RGD. Residue N679 is glycosylated (N-linked (GlcNAc...) asparagine). Residues 709-733 are disordered; the sequence is SVGGDGSKSAPACSPTSDEPDSDGK. Residues N775 and N819 are each glycosylated (N-linked (GlcNAc...) asparagine). 2 disordered regions span residues 898-958 and 982-1040; these read LRIT…HVYE and DYEY…ARFS. Positions 920 to 931 are enriched in acidic residues; sequence REEDDESYEDET. Residues 932–951 are compositionally biased toward low complexity; the sequence is TTQSQSTRHQSTQHQTHHQS. The span at 985-1005 shows a compositional bias: acidic residues; that stretch reads YIPDDQEYDGDDFEEEDDEDF. Basic residues predominate over residues 1010–1026; that stretch reads SKRVKRNPTPKKKKKGG. Residues 1027–1040 are compositionally biased toward basic and acidic residues; the sequence is EHRGEPRSDKARFS. A helical membrane pass occupies residues 1155–1177; the sequence is WWLYLLAILIGLAILILLILLLW. At 1178–1226 the chain is on the cytoplasmic side; sequence RCGFFKRNRPPTEHAELRADRQPNAQYADSQSRYTSQDQYNQGRHGQML. A disordered region spans residues 1191-1226; it reads HAELRADRQPNAQYADSQSRYTSQDQYNQGRHGQML. A compositionally biased stretch (polar residues) spans 1200–1226; it reads PNAQYADSQSRYTSQDQYNQGRHGQML.

It belongs to the integrin alpha chain family. In terms of assembly, heterodimer of an alpha and a beta subunit. Interacts with beta subunit pat-3. Interacts with dep-1. Component of an integrin containing attachment complex, composed of at least pat-2, pat-3, pat-4, pat-6, unc-52, unc-97 and unc-112. As to expression, expressed in body-wall muscle cells, distal tip cells, and vulval tissue.

The protein localises to the membrane. Its function is as follows. Required for muscle development probably through the regulation of the actin-myosin cytoskeleton. Component of an integrin containing attachment complex, which is required for muscle maintenance. During the formation of neuromuscular junctions at the larval stage, negatively regulates membrane protrusion from body wall muscles, probably through lamins such as epi-1, lam-2 and unc-52. Required for distal tip cell migration and dorsal pathfinding. Required for egg-laying. May play a role in cell motility and cell-cell interactions. Plays a role in vulval development. Probably within the alpha pat-2/beta pat-3 integrin receptor complex, plays a role in the negative regulation of let-23 signaling and vulval induction. This is probably partly by restricting the mobility of the let-23 receptor on the plasma membrane of vulval cells which thereby attenuates let-23 signaling. This Caenorhabditis elegans protein is Integrin alpha pat-2.